Here is a 140-residue protein sequence, read N- to C-terminus: Organic hydroperoxide resistance protein-like (140 aa).

It belongs to the OsmC/Ohr family.

The protein is Organic hydroperoxide resistance protein-like of Mycoplasma genitalium (strain ATCC 33530 / DSM 19775 / NCTC 10195 / G37) (Mycoplasmoides genitalium).